Consider the following 619-residue polypeptide: Probable transporter mch1 (619 aa).

12 consecutive transmembrane segments (helical) span residues 88–108 (VISC…PLFL), 120–140 (AVSI…GYLC), 147–167 (PLAL…AFAY), 184–204 (VMVV…LAAV), 219–239 (IMLA…SQVA), 261–281 (FLFL…GLRI), 377–397 (TMWW…AYIN), 428–448 (IIAL…DFFA), 480–500 (LAFL…LSSP), 515–535 (LIGL…SVVW), 541–561 (GTNW…WGVI), and 589–609 (FWAV…ILAW).

This sequence belongs to the major facilitator superfamily.

It is found in the vacuole membrane. Its function is as follows. Probable transporter. The chain is Probable transporter mch1 (mch1) from Aspergillus fumigatus (strain ATCC MYA-4609 / CBS 101355 / FGSC A1100 / Af293) (Neosartorya fumigata).